The sequence spans 662 residues: Threonine--tRNA ligase (662 aa).

Residues 1-64 enclose the TGS domain; it reads MSQSVSLTFP…ADGKIEIITR (64 aa). A catalytic region spans residues 245 to 547; that stretch reads DHRRLGREMD…LIENFAGHMP (303 aa). Zn(2+) contacts are provided by Cys-341, His-392, and His-524.

This sequence belongs to the class-II aminoacyl-tRNA synthetase family. Homodimer. Requires Zn(2+) as cofactor.

It is found in the cytoplasm. The enzyme catalyses tRNA(Thr) + L-threonine + ATP = L-threonyl-tRNA(Thr) + AMP + diphosphate + H(+). In terms of biological role, catalyzes the attachment of threonine to tRNA(Thr) in a two-step reaction: L-threonine is first activated by ATP to form Thr-AMP and then transferred to the acceptor end of tRNA(Thr). Also edits incorrectly charged L-seryl-tRNA(Thr). The chain is Threonine--tRNA ligase from Rhizobium rhizogenes (strain K84 / ATCC BAA-868) (Agrobacterium radiobacter).